Consider the following 68-residue polypeptide: Large ribosomal subunit protein bL31 (68 aa).

Zn(2+) contacts are provided by C16, C18, C37, and C40.

It belongs to the bacterial ribosomal protein bL31 family. Type A subfamily. Part of the 50S ribosomal subunit. Zn(2+) serves as cofactor.

Binds the 23S rRNA. This chain is Large ribosomal subunit protein bL31, found in Acidithiobacillus ferrooxidans (strain ATCC 23270 / DSM 14882 / CIP 104768 / NCIMB 8455) (Ferrobacillus ferrooxidans (strain ATCC 23270)).